We begin with the raw amino-acid sequence, 296 residues long: Probable endonuclease 4 (296 aa).

Zn(2+) is bound by residues histidine 68, histidine 109, glutamate 144, aspartate 178, histidine 181, histidine 213, aspartate 226, histidine 228, and glutamate 258.

It belongs to the AP endonuclease 2 family. The cofactor is Zn(2+).

The enzyme catalyses Endonucleolytic cleavage to 5'-phosphooligonucleotide end-products.. In terms of biological role, endonuclease IV plays a role in DNA repair. It cleaves phosphodiester bonds at apurinic or apyrimidinic (AP) sites, generating a 3'-hydroxyl group and a 5'-terminal sugar phosphate. This chain is Probable endonuclease 4, found in Staphylococcus aureus (strain MRSA252).